Consider the following 493-residue polypeptide: Extracellular tyrosine-protein kinase PKDCC (493 aa).

A signal peptide spans 1 to 32 (MRRRRAAVAAGFCASFLLGSVLNVLFAPGSEP). Residues 28–128 (PGSEPPRPGQ…PGPGSPGPGP (101 aa)) are disordered. Residues 30 to 46 (SEPPRPGQSPEPSPAPG) show a composition bias toward pro residues. Over residues 52–69 (GRGELARQIRARYEEVQR) the composition is skewed to basic and acidic residues. Pro residues-rich tracts occupy residues 95-105 (PGLPRPRPPWA) and 114-127 (GWPP…PGPG). Residue N137 is glycosylated (N-linked (GlcNAc...) asparagine). The Protein kinase domain occupies 138–493 (VSGAQYMGSG…NKTTYVKASG (356 aa)). ATP is bound by residues 144-152 (MGSGYTKAV) and K166. Y148 is modified (phosphotyrosine). S177 bears the Phosphoserine mark. D278 acts as the Proton acceptor in catalysis. Residues N320, N369, N400, N460, and N484 are each glycosylated (N-linked (GlcNAc...) asparagine).

This sequence belongs to the protein kinase superfamily. In terms of processing, N-glycosylated. Post-translationally, phosphorylated on tyrosines; probably via autophosphorylation. As to expression, highly expressed in platelets.

Its subcellular location is the secreted. It is found in the golgi apparatus. It catalyses the reaction L-tyrosyl-[protein] + ATP = O-phospho-L-tyrosyl-[protein] + ADP + H(+). Secreted tyrosine-protein kinase that mediates phosphorylation of extracellular proteins and endogenous proteins in the secretory pathway, which is essential for patterning at organogenesis stages. Mediates phosphorylation of MMP1, MMP13, MMP14, MMP19 and ERP29. Probably plays a role in platelets: rapidly and quantitatively secreted from platelets in response to stimulation of platelet degranulation. May also have serine/threonine protein kinase activity. Required for longitudinal bone growth through regulation of chondrocyte differentiation. May be indirectly involved in protein transport from the Golgi apparatus to the plasma membrane. In Homo sapiens (Human), this protein is Extracellular tyrosine-protein kinase PKDCC.